Consider the following 365-residue polypeptide: Iron-sulfur cluster assembly protein SufC (365 aa).

An ABC transporter domain is found at 118-364 (LEINDLHAIE…ESDGYAQFVE (247 aa)). 152-159 (GRNGSGKS) is an ATP binding site.

Belongs to the ABC transporter superfamily. Ycf16 family. In terms of assembly, component of a complex composed of SufB, SufC and SufD in a stoichiometric ratio of 1:2:1. Interacts with SufB. Interacts with SufD; the interaction enhances the ATPase activity of SufC.

It is found in the plastid. Its subcellular location is the apicoplast. The enzyme catalyses ATP + H2O = ADP + phosphate + H(+). Its pathway is cofactor biosynthesis; iron-sulfur cluster biosynthesis. Functionally, participates in the sulfur mobilization (SUF) pathway for iron-sulfur (Fe-S) cluster biogenesis. As part of a complex consisting of SufB-SufC(2)-SufD, involved in assembly of [4Fe-4S] clusters. Exhibits ATPase activity. This Plasmodium berghei (strain Anka) protein is Iron-sulfur cluster assembly protein SufC.